The following is a 323-amino-acid chain: HPr kinase/phosphorylase (323 aa).

Catalysis depends on residues histidine 146 and lysine 167. 161–168 (GESGLGKS) serves as a coordination point for ATP. Serine 168 contributes to the Mg(2+) binding site. Residue aspartate 185 is the Proton acceptor; for phosphorylation activity. Proton donor; for dephosphorylation activity of the active site. The segment at 209 to 218 (LEVRGLGLLD) is important for the catalytic mechanism of both phosphorylation and dephosphorylation. Glutamate 210 contacts Mg(2+). Arginine 250 is an active-site residue. The tract at residues 271–276 (QVAAGR) is important for the catalytic mechanism of dephosphorylation.

It belongs to the HPrK/P family. In terms of assembly, homohexamer. Mg(2+) serves as cofactor.

The catalysed reaction is [HPr protein]-L-serine + ATP = [HPr protein]-O-phospho-L-serine + ADP + H(+). It catalyses the reaction [HPr protein]-O-phospho-L-serine + phosphate + H(+) = [HPr protein]-L-serine + diphosphate. In terms of biological role, catalyzes the ATP- as well as the pyrophosphate-dependent phosphorylation of a specific serine residue in HPr, a phosphocarrier protein of the phosphoenolpyruvate-dependent sugar phosphotransferase system (PTS). HprK/P also catalyzes the pyrophosphate-producing, inorganic phosphate-dependent dephosphorylation (phosphorolysis) of seryl-phosphorylated HPr (P-Ser-HPr). This is HPr kinase/phosphorylase from Cupriavidus metallidurans (strain ATCC 43123 / DSM 2839 / NBRC 102507 / CH34) (Ralstonia metallidurans).